Reading from the N-terminus, the 211-residue chain is Protein-L-isoaspartate O-methyltransferase (211 aa).

Residue serine 62 is part of the active site.

It belongs to the methyltransferase superfamily. L-isoaspartyl/D-aspartyl protein methyltransferase family.

It is found in the cytoplasm. The enzyme catalyses [protein]-L-isoaspartate + S-adenosyl-L-methionine = [protein]-L-isoaspartate alpha-methyl ester + S-adenosyl-L-homocysteine. Its function is as follows. Catalyzes the methyl esterification of L-isoaspartyl residues in peptides and proteins that result from spontaneous decomposition of normal L-aspartyl and L-asparaginyl residues. It plays a role in the repair and/or degradation of damaged proteins. The protein is Protein-L-isoaspartate O-methyltransferase of Shewanella baltica (strain OS223).